A 141-amino-acid polypeptide reads, in one-letter code: Hemoglobin subunit alpha (141 aa).

Residues 1-141 (VLSPADKSNV…VSTVLTSKYR (141 aa)) form the Globin domain. A Phosphoserine modification is found at serine 3. Lysine 7 and lysine 11 each carry N6-succinyllysine. Lysine 16 is subject to N6-acetyllysine; alternate. Lysine 16 bears the N6-succinyllysine; alternate mark. Residue tyrosine 24 is modified to Phosphotyrosine. Serine 35 is modified (phosphoserine). Lysine 40 bears the N6-succinyllysine mark. Serine 49 carries the post-translational modification Phosphoserine. Residue histidine 58 coordinates O2. Histidine 87 contacts heme b. A Phosphoserine modification is found at serine 102. The residue at position 108 (threonine 108) is a Phosphothreonine. A phosphoserine mark is found at serine 124 and serine 131. Residues threonine 134 and threonine 137 each carry the phosphothreonine modification. Serine 138 bears the Phosphoserine mark.

The protein belongs to the globin family. Heterotetramer of two alpha chains and two beta chains. In terms of tissue distribution, red blood cells.

In terms of biological role, involved in oxygen transport from the lung to the various peripheral tissues. Its function is as follows. Hemopressin acts as an antagonist peptide of the cannabinoid receptor CNR1. Hemopressin-binding efficiently blocks cannabinoid receptor CNR1 and subsequent signaling. The sequence is that of Hemoglobin subunit alpha (HBA) from Mico argentatus (Silvery marmoset).